We begin with the raw amino-acid sequence, 145 residues long: Antiholin-like protein LrgA (145 aa).

Transmembrane regions (helical) follow at residues 10–30 (PAHFFHQVIVIALVLFVSKII), 33–53 (FMPIPMPASVIGLVLLFVLLC), 72–92 (NIGLLFVPAGISVVNSLGVIS), and 96–116 (FLIIGLIIVSTILLLICTGYV).

The protein belongs to the CidA/LrgA family. LrgA subfamily.

The protein resides in the cell membrane. Its function is as follows. Inhibits the expression or activity of extracellular murein hydrolases by interacting, possibly with LrgB, with the holin-like proteins CidA and/or CidB. The LrgAB and CidAB proteins may affect the proton motive force of the membrane. May be involved in programmed cell death (PCD), possibly triggering PCD in response to antibiotics and environmental stresses. This is Antiholin-like protein LrgA from Staphylococcus aureus (strain Mu3 / ATCC 700698).